The chain runs to 177 residues: Large ribosomal subunit protein uL6 (177 aa).

The protein belongs to the universal ribosomal protein uL6 family. As to quaternary structure, part of the 50S ribosomal subunit.

Its function is as follows. This protein binds to the 23S rRNA, and is important in its secondary structure. It is located near the subunit interface in the base of the L7/L12 stalk, and near the tRNA binding site of the peptidyltransferase center. In Alkalilimnicola ehrlichii (strain ATCC BAA-1101 / DSM 17681 / MLHE-1), this protein is Large ribosomal subunit protein uL6.